A 657-amino-acid polypeptide reads, in one-letter code: MPASTLLQHAQIDWDDQGRPHSRQYGDVYFAINEGIAETQHVFLEQTRLRQRFANLAPHGCLVIGETGFGTGMNFFCAWQLFAETAHADARLHFVSVEKYPLGHADMARAMRLWPELAAFTEPFLRQYVAVHQGFQQFTFDQGRITLTLLIGDVLEQLPQLDARIDVWFLDGFAPAKNPDMWTPELFTQLARLSHAGTALGTFTTTGWVRRSLIEAGFTMKKVPGIGKKWEVMSGEYTGPPNAPMSAPWYARPTAPEGPREALVIGAGLAGSASAASLAARGWQVTVLERHDAAAREASGNPQGVLYLKLSAHGTALSQMILSGFGYTRRQLELLQRGQDWDACGVLQLAFDSKEAERQGRLADAFEGSLLRAVQRNEAEAIAGVGLPAGGLFYTEGGWVHPPALCKAQLQHPNIRLLAHHDVLALRKADGLWQAWAGDRLLASAPMVVLAGAADVKRFEPCAQLPLKRIRGQITRLPVTDASRALATVVCAEGYVAPPRGEEHTLGASFDFHSDDLTPTVAEHQGNLAMLDEISTDLARRLGTAALAPEQLQGRAAFRCTSPDYLPIVGPVADPAAFAEAYAVLAKDARQVPEVPCPWLEGLYVNSGHGSRGLITAPLSGELIAAWVSGEPLPLPRAVAEACHPNRFGLRRLIRGK.

The interval 1–238 (MPASTLLQHA…KWEVMSGEYT (238 aa)) is tRNA (mnm(5)s(2)U34)-methyltransferase. Residues 265-657 (IGAGLAGSAS…FGLRRLIRGK (393 aa)) form an FAD-dependent cmnm(5)s(2)U34 oxidoreductase region.

The protein in the N-terminal section; belongs to the methyltransferase superfamily. tRNA (mnm(5)s(2)U34)-methyltransferase family. It in the C-terminal section; belongs to the DAO family. Requires FAD as cofactor.

The protein localises to the cytoplasm. It carries out the reaction 5-aminomethyl-2-thiouridine(34) in tRNA + S-adenosyl-L-methionine = 5-methylaminomethyl-2-thiouridine(34) in tRNA + S-adenosyl-L-homocysteine + H(+). In terms of biological role, catalyzes the last two steps in the biosynthesis of 5-methylaminomethyl-2-thiouridine (mnm(5)s(2)U) at the wobble position (U34) in tRNA. Catalyzes the FAD-dependent demodification of cmnm(5)s(2)U34 to nm(5)s(2)U34, followed by the transfer of a methyl group from S-adenosyl-L-methionine to nm(5)s(2)U34, to form mnm(5)s(2)U34. In Pseudomonas putida (strain W619), this protein is tRNA 5-methylaminomethyl-2-thiouridine biosynthesis bifunctional protein MnmC.